A 404-amino-acid polypeptide reads, in one-letter code: Phosphopentomutase (404 aa).

Residues D10, D303, H308, D344, H345, and H356 each contribute to the Mn(2+) site.

Belongs to the phosphopentomutase family. The cofactor is Mn(2+).

The protein resides in the cytoplasm. It catalyses the reaction 2-deoxy-alpha-D-ribose 1-phosphate = 2-deoxy-D-ribose 5-phosphate. It carries out the reaction alpha-D-ribose 1-phosphate = D-ribose 5-phosphate. It participates in carbohydrate degradation; 2-deoxy-D-ribose 1-phosphate degradation; D-glyceraldehyde 3-phosphate and acetaldehyde from 2-deoxy-alpha-D-ribose 1-phosphate: step 1/2. Isomerase that catalyzes the conversion of deoxy-ribose 1-phosphate (dRib-1-P) and ribose 1-phosphate (Rib-1-P) to deoxy-ribose 5-phosphate (dRib-5-P) and ribose 5-phosphate (Rib-5-P), respectively. The polypeptide is Phosphopentomutase (Shewanella sp. (strain MR-4)).